The primary structure comprises 90 residues: Co-chaperonin GroES (90 aa).

The protein belongs to the GroES chaperonin family. In terms of assembly, heptamer of 7 subunits arranged in a ring. Interacts with the chaperonin GroEL.

Its subcellular location is the cytoplasm. Functionally, together with the chaperonin GroEL, plays an essential role in assisting protein folding. The GroEL-GroES system forms a nano-cage that allows encapsulation of the non-native substrate proteins and provides a physical environment optimized to promote and accelerate protein folding. GroES binds to the apical surface of the GroEL ring, thereby capping the opening of the GroEL channel. The polypeptide is Co-chaperonin GroES (Fusobacterium nucleatum subsp. nucleatum (strain ATCC 25586 / DSM 15643 / BCRC 10681 / CIP 101130 / JCM 8532 / KCTC 2640 / LMG 13131 / VPI 4355)).